We begin with the raw amino-acid sequence, 1515 residues long: Apolipophorin (1515 aa).

A VWFD domain is found at 952-1118; it reads LRGVVVNGQH…NSYRLASSCP (167 aa). Cys976 and Cys1117 are joined by a disulfide. Residue Asn988 is glycosylated (N-linked (GlcNAc...) asparagine).

Hemolymph.

The protein localises to the secreted. Its function is as follows. Mediates transport for various types of lipids in hemolymph. Acts by forming lipoprotein particles that bind lipoproteins and lipids. Binds the A.niger cell wall component alpha-1,3-glucan, a fungal pathogen-associated molecular pattern (PAMP) that activates the host immune response. This Galleria mellonella (Greater wax moth) protein is Apolipophorin.